The following is a 58-amino-acid chain: Large ribosomal subunit protein uL30 (58 aa).

It belongs to the universal ribosomal protein uL30 family. As to quaternary structure, part of the 50S ribosomal subunit.

The chain is Large ribosomal subunit protein uL30 from Acinetobacter baumannii (strain AB307-0294).